A 952-amino-acid polypeptide reads, in one-letter code: Ent-kaur-16-ene synthase (952 aa).

Asp668, Glu672, Asn848, Asp849, Ser852, and Asp856 together coordinate Mg(2+). The DEXXE motif motif lies at Asp668–Glu672.

The protein belongs to the terpene synthase family. It depends on Mg(2+) as a cofactor.

It catalyses the reaction ent-copalyl diphosphate = ent-kaur-16-ene + diphosphate. The enzyme catalyses (2E,6E,10E)-geranylgeranyl diphosphate = ent-copalyl diphosphate. Its pathway is plant hormone biosynthesis; gibberellin biosynthesis. In terms of biological role, catalyzes the conversion of geranylgeranyl diphosphate to the gibberellin precursor ent-kaurene diphosphate in a two step process. This chain is Ent-kaur-16-ene synthase (cps), found in Fusarium fujikuroi (Bakanae and foot rot disease fungus).